The primary structure comprises 319 residues: Olfactory receptor 13F1 (319 aa).

Over 1 to 25 the chain is Extracellular; that stretch reads MFPANWTSVKVFFFLGFFHYPKVQV. N-linked (GlcNAc...) asparagine glycosylation occurs at Asn5. A helical transmembrane segment spans residues 26–46; the sequence is IIFAVCLLMYLITLLGNIFLI. Residues 47–54 lie on the Cytoplasmic side of the membrane; sequence SITILDSH. Residues 55 to 75 traverse the membrane as a helical segment; the sequence is LHTPMYLFLSNLSFLDIWYSS. Topologically, residues 76 to 99 are extracellular; that stretch reads SALSPMLANFVSGRNTISFSGCAT. Cys97 and Cys189 are joined by a disulfide. A helical membrane pass occupies residues 100–120; the sequence is QMYLSLAMGSTECVLLPMMAY. Residues 121–139 lie on the Cytoplasmic side of the membrane; sequence DRYVAICNPLRYPVIMNRR. A helical transmembrane segment spans residues 140-160; it reads TCVQIAAGSWMTGCLTAMVEM. Topologically, residues 161-197 are extracellular; that stretch reads MSVLPLSLCGNSIINHFTCEILAILKLVCVDTSLVQL. Residues 198-217 traverse the membrane as a helical segment; the sequence is IMLVISVLLLPMPMLLICIS. The Cytoplasmic segment spans residues 218-237; the sequence is YAFILASILRISSVEGRSKA. The chain crosses the membrane as a helical span at residues 238–258; it reads FSTCTAHLMVVVLFYGTALSM. Topologically, residues 259–271 are extracellular; sequence HLKPSAVDSQEID. A helical transmembrane segment spans residues 272–292; sequence KFMALVYAGQTPMLNPIIYSL. Residues 293–319 lie on the Cytoplasmic side of the membrane; sequence RNKEVKVALKKLLIRNHFNTAFISILK.

The protein belongs to the G-protein coupled receptor 1 family.

It localises to the cell membrane. Its function is as follows. Odorant receptor. This is Olfactory receptor 13F1 (OR13F1) from Homo sapiens (Human).